A 375-amino-acid chain; its full sequence is MSCPVIELTQQLIRRPSLSPDDAGCQALMIERLRKIGFTIEHMDFGDTQNFWAWRGRGETLAFAGHTDVVPAGDVDRWINPPFEPTIRDGMLFGRGAADMKGSLAAMVVAAERFVAQHPHHRGRLAFLITSDEEASAKNGTVKVVEALMARNERLDYCLVGEPSSTEIVGDVVKNGRRGSLTCNLTIHGVQGHVAYPHLADNPVHRAAPFLNELVAIEWDRGNDFFPATSMQVANIQAGTGSNNVIPGELFVQFNFRFSTELTDEMIKERVHALLEKHQLRYTVDWWLSGQPFLTARGKLVDAVVNAIEHYNEIKPQLLTTGGTSDGRFIARMGAQVVELGPVNATIHKINECVNAADLQLLARMYQRIMEQLVA.

His-66 is a Zn(2+) binding site. Residue Asp-68 is part of the active site. Asp-99 is a binding site for Zn(2+). Glu-133 (proton acceptor) is an active-site residue. Zn(2+) contacts are provided by Glu-134, Glu-162, and His-348.

The protein belongs to the peptidase M20A family. DapE subfamily. In terms of assembly, homodimer. Zn(2+) is required as a cofactor. It depends on Co(2+) as a cofactor.

The catalysed reaction is N-succinyl-(2S,6S)-2,6-diaminopimelate + H2O = (2S,6S)-2,6-diaminopimelate + succinate. It participates in amino-acid biosynthesis; L-lysine biosynthesis via DAP pathway; LL-2,6-diaminopimelate from (S)-tetrahydrodipicolinate (succinylase route): step 3/3. In terms of biological role, catalyzes the hydrolysis of N-succinyl-L,L-diaminopimelic acid (SDAP), forming succinate and LL-2,6-diaminopimelate (DAP), an intermediate involved in the bacterial biosynthesis of lysine and meso-diaminopimelic acid, an essential component of bacterial cell walls. The sequence is that of Succinyl-diaminopimelate desuccinylase from Salmonella dublin (strain CT_02021853).